The chain runs to 287 residues: Troponin T, cardiac muscle (287 aa).

Acidic residues-rich tracts occupy residues 1-31 (MSDV…EEAG) and 44-59 (EDGE…DGPV). Disordered regions lie at residues 1-85 (MSDV…GERV) and 124-208 (KDRI…EKKK). Serine 2 carries the post-translational modification N-acetylserine. Residue serine 2 is modified to Phosphoserine; by CK2. The segment covering 66 to 79 (APGPFMPNLVPPKI) has biased composition (pro residues). 2 stretches are compositionally biased toward basic and acidic residues: residues 124-173 (KDRI…DEAR) and 192-208 (QAER…EKKK). Serine 197 bears the Phosphoserine; by PKC/PRKCA mark. A Phosphothreonine; by PKC/PRKCA and RAF1 modification is found at threonine 202. Threonine 283 bears the Phosphothreonine; by PKC/PRKCA mark.

The protein belongs to the troponin T family. Post-translationally, phosphorylation at Thr-202 by PRKCA induces significant reduction in myofilament calcium sensitivity and actomyosin ATPase activity.

In terms of biological role, troponin T is the tropomyosin-binding subunit of troponin, the thin filament regulatory complex which confers calcium-sensitivity to striated muscle actomyosin ATPase activity. The sequence is that of Troponin T, cardiac muscle (TNNT2) from Ovis aries (Sheep).